The primary structure comprises 656 residues: Pyoverdine export ATP-binding/permease protein PvdT (656 aa).

An ABC transporter domain is found at 6–245 (IDLRAIRKSY…SANPAALQAV (240 aa)). 43–50 (GASGSGKS) is a binding site for ATP. Helical transmembrane passes span 284–304 (ALTL…LAVG), 538–558 (IAAI…LMTV), 589–609 (LSVV…AALL), and 619–639 (VPAV…FGFM).

The protein belongs to the ABC transporter superfamily. Macrolide exporter (TC 3.A.1.122) family. In terms of assembly, part of the tripartite efflux system PvdRT-OpmQ, which is composed of an inner membrane component with both ATPase and permease domains, PvdT, a periplasmic membrane fusion protein, PvdR, and an outer membrane component, OpmQ.

It localises to the cell inner membrane. In terms of biological role, part of the tripartite efflux system PvdRT-OpmQ required for the secretion into the extracellular milieu of the siderophore pyoverdine (PVD), which is involved in iron acquisition. This subunit binds PVD and drives its secretion by hydrolyzing ATP. The system is responsible for export of newly synthesized PVD after the final steps of biosynthesis have taken place in the periplasm. It is also responsible for recycling of PVD after internalization of ferri-PVD into the periplasm by the outer-membrane receptor FpvA and release of iron from PVD, thus making PVD available for new cycles of iron uptake. The protein is Pyoverdine export ATP-binding/permease protein PvdT of Pseudomonas savastanoi pv. phaseolicola (strain 1448A / Race 6) (Pseudomonas syringae pv. phaseolicola (strain 1448A / Race 6)).